We begin with the raw amino-acid sequence, 397 residues long: 4-O-methyl-glucuronoyl methylesterase (397 aa).

An N-terminal signal peptide occupies residues 1–18; it reads MVHLTSALLVAGAAFAAA. Cystine bridges form between Cys-31-Cys-65, Cys-212-Cys-347, and Cys-244-Cys-319. Residues 211–216 carry the GXSYXG catalytic site motif motif; sequence GCSRNG. Ser-213 serves as the catalytic Nucleophile. Substrate is bound by residues Lys-217, Gln-259, Glu-267, and Trp-310. His-346 acts as the Proton donor/acceptor in catalysis.

It belongs to the carbohydrate esterase 15 (CE15) family.

The protein resides in the secreted. The catalysed reaction is a 4-O-methyl-alpha-D-glucuronosyl ester derivative + H2O = 4-O-methyl-alpha-D-glucuronate derivative + an alcohol + H(+). In terms of biological role, glucuronoyl esterase which may play a significant role in biomass degradation, as it is considered to disconnect hemicellulose from lignin through the hydrolysis of the ester bond between 4-O-methyl-D-glucuronic acid residues of glucuronoxylans and aromatic alcohols of lignin. The chain is 4-O-methyl-glucuronoyl methylesterase (ge2) from Thermothelomyces thermophilus (strain ATCC 42464 / BCRC 31852 / DSM 1799) (Sporotrichum thermophile).